Here is a 100-residue protein sequence, read N- to C-terminus: MIREERLLKVILAPHISEKSTVNAEKHNTVVFRVAIDATKAEIKAAVAKLFEVEVESVRTLVSKGKTKRTGGRVGRRSDWKKAYVTLAAGADIDFVGGAE.

The protein belongs to the universal ribosomal protein uL23 family. Part of the 50S ribosomal subunit. Contacts protein L29, and trigger factor when it is bound to the ribosome.

One of the early assembly proteins it binds 23S rRNA. One of the proteins that surrounds the polypeptide exit tunnel on the outside of the ribosome. Forms the main docking site for trigger factor binding to the ribosome. This is Large ribosomal subunit protein uL23 from Shewanella sp. (strain MR-4).